The sequence spans 254 residues: Imidazole glycerol phosphate synthase subunit HisF (254 aa).

Active-site residues include Asp-11 and Asp-130.

This sequence belongs to the HisA/HisF family. In terms of assembly, heterodimer of HisH and HisF.

It is found in the cytoplasm. The enzyme catalyses 5-[(5-phospho-1-deoxy-D-ribulos-1-ylimino)methylamino]-1-(5-phospho-beta-D-ribosyl)imidazole-4-carboxamide + L-glutamine = D-erythro-1-(imidazol-4-yl)glycerol 3-phosphate + 5-amino-1-(5-phospho-beta-D-ribosyl)imidazole-4-carboxamide + L-glutamate + H(+). It participates in amino-acid biosynthesis; L-histidine biosynthesis; L-histidine from 5-phospho-alpha-D-ribose 1-diphosphate: step 5/9. IGPS catalyzes the conversion of PRFAR and glutamine to IGP, AICAR and glutamate. The HisF subunit catalyzes the cyclization activity that produces IGP and AICAR from PRFAR using the ammonia provided by the HisH subunit. The chain is Imidazole glycerol phosphate synthase subunit HisF from Solibacter usitatus (strain Ellin6076).